The primary structure comprises 186 residues: Small ribosomal subunit protein uS5 (186 aa).

The region spanning 18 to 81 (FVDKLVHINR…EAAKRAMIRV (64 aa)) is the S5 DRBM domain.

This sequence belongs to the universal ribosomal protein uS5 family. Part of the 30S ribosomal subunit. Contacts proteins S4 and S8.

Functionally, with S4 and S12 plays an important role in translational accuracy. Its function is as follows. Located at the back of the 30S subunit body where it stabilizes the conformation of the head with respect to the body. This chain is Small ribosomal subunit protein uS5, found in Parvibaculum lavamentivorans (strain DS-1 / DSM 13023 / NCIMB 13966).